Consider the following 78-residue polypeptide: DNA-directed RNA polymerase subunit Rpo5 (78 aa).

This sequence belongs to the archaeal Rpo5/eukaryotic RPB5 RNA polymerase subunit family. As to quaternary structure, part of the RNA polymerase complex.

It localises to the cytoplasm. It carries out the reaction RNA(n) + a ribonucleoside 5'-triphosphate = RNA(n+1) + diphosphate. In terms of biological role, DNA-dependent RNA polymerase (RNAP) catalyzes the transcription of DNA into RNA using the four ribonucleoside triphosphates as substrates. The sequence is that of DNA-directed RNA polymerase subunit Rpo5 from Methanocaldococcus jannaschii (strain ATCC 43067 / DSM 2661 / JAL-1 / JCM 10045 / NBRC 100440) (Methanococcus jannaschii).